Here is a 489-residue protein sequence, read N- to C-terminus: Rhamnulokinase (489 aa).

13–17 contributes to the ATP binding site; it reads ASSGR. An intrachain disulfide couples Cys-68 to Cys-222. Substrate is bound by residues Gly-83 and 236–238; that span reads HDT. The active-site Proton acceptor is the Asp-237. Thr-259 contacts ATP. Asn-296 contacts substrate. Gln-304 serves as a coordination point for ATP. A disulfide bond links Cys-353 and Cys-370. Gly-402 serves as a coordination point for ATP. A disulfide bridge connects residues Cys-413 and Cys-417.

The protein belongs to the rhamnulokinase family. Monomer. Mg(2+) serves as cofactor.

It catalyses the reaction L-rhamnulose + ATP = L-rhamnulose 1-phosphate + ADP + H(+). Its pathway is carbohydrate degradation; L-rhamnose degradation; glycerone phosphate from L-rhamnose: step 2/3. In terms of biological role, involved in the catabolism of L-rhamnose (6-deoxy-L-mannose). Catalyzes the transfer of the gamma-phosphate group from ATP to the 1-hydroxyl group of L-rhamnulose to yield L-rhamnulose 1-phosphate. The protein is Rhamnulokinase of Escherichia coli O127:H6 (strain E2348/69 / EPEC).